A 900-amino-acid polypeptide reads, in one-letter code: Protein translocase subunit SecA (900 aa).

ATP is bound by residues glutamine 87, 105–109, and aspartate 512; that span reads GEGKT. A compositionally biased stretch (basic and acidic residues) spans 842-852; the sequence is QQRREEAERLA. The tract at residues 842 to 900 is disordered; it reads QQRREEAERLARQQQLSHQEEDSLNTGSPAQADRKIGRNDPCPCGSGKKYKQCHGRLQK. The Zn(2+) site is built by cysteine 883, cysteine 885, cysteine 894, and histidine 895. Residues 889–900 are compositionally biased toward basic residues; it reads KKYKQCHGRLQK.

It belongs to the SecA family. Monomer and homodimer. Part of the essential Sec protein translocation apparatus which comprises SecA, SecYEG and auxiliary proteins SecDF-YajC and YidC. The cofactor is Zn(2+).

It is found in the cell inner membrane. The protein localises to the cytoplasm. The catalysed reaction is ATP + H2O + cellular proteinSide 1 = ADP + phosphate + cellular proteinSide 2.. In terms of biological role, part of the Sec protein translocase complex. Interacts with the SecYEG preprotein conducting channel. Has a central role in coupling the hydrolysis of ATP to the transfer of proteins into and across the cell membrane, serving both as a receptor for the preprotein-SecB complex and as an ATP-driven molecular motor driving the stepwise translocation of polypeptide chains across the membrane. The sequence is that of Protein translocase subunit SecA from Pectobacterium carotovorum subsp. carotovorum (strain PC1).